A 224-amino-acid chain; its full sequence is MNILIFGPPGSGKSTHSRRIIEKYNLEYIASGDIIRAEINKGNALGREMKKYIEKGDLLPDTVINTLVLSRLRKKRENFIIDGYPRTAEQVLALENFLYDHGIRIKLAIDIFISKEESITRISGRRICRQCGAVYHIKYNPSKVPGKCDICGGEVIQREDDTPEIVSRRYDIYINNMEPIIKFYKGQGVYVQINGHGGIEEVWERIRPLLDYIWNREKKKEEFE.

Residue 10 to 15 coordinates ATP; it reads GSGKST. Residues 30-59 are NMP; sequence ASGDIIRAEINKGNALGREMKKYIEKGDLL. AMP is bound by residues S31, R36, 57 to 59, 83 to 86, and Q90; these read DLL and GYPR. The LID stretch occupies residues 124-161; the sequence is GRRICRQCGAVYHIKYNPSKVPGKCDICGGEVIQREDD. R125 is a binding site for ATP. C128 and C131 together coordinate Zn(2+). 134–135 provides a ligand contact to ATP; the sequence is VY. The Zn(2+) site is built by C148 and C151. The AMP site is built by R158 and R169. Residue G197 coordinates ATP.

The protein belongs to the adenylate kinase family. Monomer.

It is found in the cytoplasm. It catalyses the reaction AMP + ATP = 2 ADP. Its pathway is purine metabolism; AMP biosynthesis via salvage pathway; AMP from ADP: step 1/1. Its function is as follows. Catalyzes the reversible transfer of the terminal phosphate group between ATP and AMP. Plays an important role in cellular energy homeostasis and in adenine nucleotide metabolism. The protein is Adenylate kinase of Thermococcus sibiricus (strain DSM 12597 / MM 739).